A 511-amino-acid polypeptide reads, in one-letter code: ATP synthase subunit alpha (511 aa).

169–176 (GDRQTGKT) serves as a coordination point for ATP.

It belongs to the ATPase alpha/beta chains family. In terms of assembly, F-type ATPases have 2 components, CF(1) - the catalytic core - and CF(0) - the membrane proton channel. CF(1) has five subunits: alpha(3), beta(3), gamma(1), delta(1), epsilon(1). CF(0) has three main subunits: a(1), b(2) and c(9-12). The alpha and beta chains form an alternating ring which encloses part of the gamma chain. CF(1) is attached to CF(0) by a central stalk formed by the gamma and epsilon chains, while a peripheral stalk is formed by the delta and b chains.

Its subcellular location is the cell inner membrane. It catalyses the reaction ATP + H2O + 4 H(+)(in) = ADP + phosphate + 5 H(+)(out). Functionally, produces ATP from ADP in the presence of a proton gradient across the membrane. The alpha chain is a regulatory subunit. In Bartonella quintana (strain Toulouse) (Rochalimaea quintana), this protein is ATP synthase subunit alpha.